A 488-amino-acid chain; its full sequence is Glycogen synthase (488 aa).

Arginine 20 contacts ADP-alpha-D-glucose.

Belongs to the glycosyltransferase 1 family. Bacterial/plant glycogen synthase subfamily.

It carries out the reaction [(1-&gt;4)-alpha-D-glucosyl](n) + ADP-alpha-D-glucose = [(1-&gt;4)-alpha-D-glucosyl](n+1) + ADP + H(+). Its pathway is glycan biosynthesis; glycogen biosynthesis. Its function is as follows. Synthesizes alpha-1,4-glucan chains using ADP-glucose. The polypeptide is Glycogen synthase (Chlorobaculum tepidum (strain ATCC 49652 / DSM 12025 / NBRC 103806 / TLS) (Chlorobium tepidum)).